We begin with the raw amino-acid sequence, 689 residues long: Elongation factor G (689 aa).

Residues 9-283 (AKFRNIGIMA…AIIEFMPSPL (275 aa)) form the tr-type G domain. Residues 18-25 (AHIDAGKT), 82-86 (DTPGH), and 136-139 (NKMD) contribute to the GTP site.

The protein belongs to the TRAFAC class translation factor GTPase superfamily. Classic translation factor GTPase family. EF-G/EF-2 subfamily.

It localises to the cytoplasm. Its function is as follows. Catalyzes the GTP-dependent ribosomal translocation step during translation elongation. During this step, the ribosome changes from the pre-translocational (PRE) to the post-translocational (POST) state as the newly formed A-site-bound peptidyl-tRNA and P-site-bound deacylated tRNA move to the P and E sites, respectively. Catalyzes the coordinated movement of the two tRNA molecules, the mRNA and conformational changes in the ribosome. This chain is Elongation factor G, found in Clostridium botulinum (strain 657 / Type Ba4).